The following is a 206-amino-acid chain: MPTVDLYNIEGQKVGDLQLAETVFAVEVNEDVLHQVVVAQLANKRQGNQSAKTRAEVSGGGKKPWRQKGTGRARQGSIRAPQWIHGGVVFAPKPRDYKMSIPKSMRRVAMKSALTSKVNENELVVLESLELDAPKTKEMVKMINAFEGKKPLIVVPESNEVIYKSVRNIEGATVVPVNNINVYDILKHDKFIITKEAVSKIEEVYA.

The segment at 45-76 (RQGNQSAKTRAEVSGGGKKPWRQKGTGRARQG) is disordered.

It belongs to the universal ribosomal protein uL4 family. As to quaternary structure, part of the 50S ribosomal subunit.

Its function is as follows. One of the primary rRNA binding proteins, this protein initially binds near the 5'-end of the 23S rRNA. It is important during the early stages of 50S assembly. It makes multiple contacts with different domains of the 23S rRNA in the assembled 50S subunit and ribosome. In terms of biological role, forms part of the polypeptide exit tunnel. The chain is Large ribosomal subunit protein uL4 from Clostridium novyi (strain NT).